A 1549-amino-acid chain; its full sequence is ATP-binding cassette sub-family C member 9 (1549 aa).

At 1–30 (MSLSFCGNNISSYNINDGVLQNSCFVDALN) the chain is on the extracellular side. Residue Asn-9 is glycosylated (N-linked (GlcNAc...) asparagine). A helical membrane pass occupies residues 31–51 (LVPHVFLLFITFPILFIGWGS). Residues 52-72 (QSSKVQIHHNTWLHFPGHNLR) are Cytoplasmic-facing. The chain crosses the membrane as a helical span at residues 73–93 (WILTFALLFVHVCEIAEGIVS). At 94-101 (DSRRESRH) the chain is on the extracellular side. A helical membrane pass occupies residues 102–122 (LHLFMPAVMGFVATTTSIVYY). Residues 123 to 132 (HNIETSNFPK) lie on the Cytoplasmic side of the membrane. Residues 133–153 (LLLALFLYWVMAFITKTIKLV) traverse the membrane as a helical segment. Over 154–167 (KYCQSGLDISNLRF) the chain is Extracellular. The helical transmembrane segment at 168–188 (CITGMMVILNGLLMAVEINVI) threads the bilayer. Over 189–301 (RVRRYVFFMN…AFGRPILLSS (113 aa)) the chain is Cytoplasmic. The 301-residue stretch at 297-597 (ILLSSTFRYL…LSTVVRFAVK (301 aa)) folds into the ABC transmembrane type-1 1 domain. Residues 302 to 322 (TFRYLADLLGFAGPLCISGIV) traverse the membrane as a helical segment. Over 323 to 350 (QRVNETQNGTNNTTGISETLSSKEFLEN) the chain is Extracellular. Asn-326, Asn-330, Asn-333, and Asn-334 each carry an N-linked (GlcNAc...) asparagine glycan. A helical transmembrane segment spans residues 351–371 (AYVLAVLLFLALILQRTFLQA). Over 372–423 (SYYVTIETGINLRGALLAMIYNKILRLSTSNLSMGEMTLGQINNLVAIETNQ) the chain is Cytoplasmic. The chain crosses the membrane as a helical span at residues 424–444 (LMWFLFLCPNLWAMPVQIIMG). The Extracellular segment spans residues 445–455 (VILLYNLLGSS). Residues 456-476 (ALVGAAVIVLLAPIQYFIATK) traverse the membrane as a helical segment. Topologically, residues 477 to 531 (LAEAQKSTLDYSTERLKKTNEILKGIKLLKLYAWEHIFCKSVEETRMKELSSLKT) are cytoplasmic. A helical membrane pass occupies residues 532-552 (FALYTSLSIFMNAAIPIAAVL). At 553 to 571 (ATFVTHAYASGNNLKPAEA) the chain is on the extracellular side. A helical transmembrane segment spans residues 572–592 (FASLSLFHILVTPLFLLSTVV). Residues 593–990 (RFAVKAIISV…TCWRYLTSGG (398 aa)) lie on the Cytoplasmic side of the membrane. The region spanning 672–912 (IKVTNGYFSW…DVELYEHWKT (241 aa)) is the ABC transporter 1 domain. 705–712 (GQVGCGKS) is an ATP binding site. The interval 944-967 (REAKAQMEDEDEEEEEEEDEDDNM) is disordered. Over residues 951–966 (EDEDEEEEEEEDEDDN) the composition is skewed to acidic residues. Residues 991-1011 (FFLLILMIFSKLLKHSVIVAI) form a helical membrane-spanning segment. The ABC transmembrane type-1 2 domain occupies 994–1274 (LILMIFSKLL…VVRNLADLEV (281 aa)). The Extracellular segment spans residues 1012–1034 (DYWLATWTSEYSINNTGKADQTY). The chain crosses the membrane as a helical span at residues 1035 to 1055 (YVAGFSILCGAGIFLCLVTSL). Topologically, residues 1056-1127 (TVEWMGLTAA…TLLCLSAIGM (72 aa)) are cytoplasmic. Residues 1128–1148 (ISYATPVFLVALLPLGVAFYF) traverse the membrane as a helical segment. Residues 1149-1245 (IQKYFRVASK…IASISGSSNS (97 aa)) lie on the Extracellular side of the membrane. Residues 1246-1266 (GLVGLGLLYALTITNYLNWVV) form a helical membrane-spanning segment. The Cytoplasmic segment spans residues 1267–1549 (RNLADLEVQM…LFSTLVMTNK (283 aa)). In terms of domain architecture, ABC transporter 2 spans 1312–1546 (IKIHDLCVRY…KNGLFSTLVM (235 aa)). Position 1346-1353 (1346-1353 (GRTGSGKS)) interacts with ATP.

The protein belongs to the ABC transporter superfamily. ABCC family. Conjugate transporter (TC 3.A.1.208) subfamily. As to quaternary structure, interacts with KCNJ11. Interacts with KCNJ8.

It localises to the membrane. Subunit of ATP-sensitive potassium channels (KATP). Can form cardiac and smooth muscle-type KATP channels with KCNJ11. KCNJ11 forms the channel pore while ABCC9 is required for activation and regulation. Can form a sulfonylurea-sensitive but ATP-insensitive potassium channel with KCNJ8. In Homo sapiens (Human), this protein is ATP-binding cassette sub-family C member 9 (ABCC9).